A 127-amino-acid polypeptide reads, in one-letter code: Trefoil factor 2 (127 aa).

The first 21 residues, 1–21, serve as a signal peptide directing secretion; the sequence is EPQRPAPGHPPPAGAVCLTGA. Glutamine 22 carries the post-translational modification Pyrrolidone carboxylic acid. P-type domains follow at residues 27 to 71 and 77 to 120; these read CRCS…FKPL and EECV…FFPM. 7 cysteine pairs are disulfide-bonded: cysteine 27–cysteine 125, cysteine 29–cysteine 56, cysteine 40–cysteine 55, cysteine 50–cysteine 67, cysteine 79–cysteine 105, cysteine 89–cysteine 104, and cysteine 99–cysteine 116.

Found in pancreas.

The protein resides in the secreted. Its function is as follows. Inhibits gastrointestinal motility and gastric acid secretion. Could function as a structural component of gastric mucus, possibly by stabilizing glycoproteins in the mucus gel through interactions with carbohydrate side chains. This is Trefoil factor 2 (TFF2) from Sus scrofa (Pig).